The primary structure comprises 671 residues: DNA ligase (671 aa).

Residues 35-39, 84-85, and Glu113 contribute to the NAD(+) site; these read DQQYD and SL. Lys115 serves as the catalytic N6-AMP-lysine intermediate. NAD(+)-binding residues include Arg136, Glu170, Lys285, and Lys309. Zn(2+) contacts are provided by Cys403, Cys406, Cys421, and Cys426. The region spanning 588 to 671 is the BRCT domain; the sequence is TTQTIFTNKK…QIIENSQIKL (84 aa).

Belongs to the NAD-dependent DNA ligase family. LigA subfamily. Mg(2+) is required as a cofactor. Mn(2+) serves as cofactor.

The catalysed reaction is NAD(+) + (deoxyribonucleotide)n-3'-hydroxyl + 5'-phospho-(deoxyribonucleotide)m = (deoxyribonucleotide)n+m + AMP + beta-nicotinamide D-nucleotide.. DNA ligase that catalyzes the formation of phosphodiester linkages between 5'-phosphoryl and 3'-hydroxyl groups in double-stranded DNA using NAD as a coenzyme and as the energy source for the reaction. It is essential for DNA replication and repair of damaged DNA. The protein is DNA ligase of Onion yellows phytoplasma (strain OY-M).